The following is a 281-amino-acid chain: Pantothenate synthetase (281 aa).

30 to 37 (MGNLHLGH) is an ATP binding site. Histidine 37 (proton donor) is an active-site residue. Glutamine 61 provides a ligand contact to (R)-pantoate. Glutamine 61 is a beta-alanine binding site. Position 149–152 (149–152 (GRKD)) interacts with ATP. Glutamine 155 contacts (R)-pantoate. ATP contacts are provided by residues isoleucine 178 and 186–189 (MSSR).

Belongs to the pantothenate synthetase family. Homodimer.

It is found in the cytoplasm. The catalysed reaction is (R)-pantoate + beta-alanine + ATP = (R)-pantothenate + AMP + diphosphate + H(+). Its pathway is cofactor biosynthesis; (R)-pantothenate biosynthesis; (R)-pantothenate from (R)-pantoate and beta-alanine: step 1/1. Catalyzes the condensation of pantoate with beta-alanine in an ATP-dependent reaction via a pantoyl-adenylate intermediate. The sequence is that of Pantothenate synthetase from Shewanella sediminis (strain HAW-EB3).